The following is a 437-amino-acid chain: UDP-N-acetylmuramoylalanine--D-glutamate ligase (437 aa).

112–118 (GSNGKST) is a binding site for ATP.

It belongs to the MurCDEF family.

The protein localises to the cytoplasm. It catalyses the reaction UDP-N-acetyl-alpha-D-muramoyl-L-alanine + D-glutamate + ATP = UDP-N-acetyl-alpha-D-muramoyl-L-alanyl-D-glutamate + ADP + phosphate + H(+). It participates in cell wall biogenesis; peptidoglycan biosynthesis. Its function is as follows. Cell wall formation. Catalyzes the addition of glutamate to the nucleotide precursor UDP-N-acetylmuramoyl-L-alanine (UMA). The chain is UDP-N-acetylmuramoylalanine--D-glutamate ligase from Haemophilus influenzae (strain PittGG).